We begin with the raw amino-acid sequence, 463 residues long: Abscisic acid 8'-hydroxylase 3 (463 aa).

The helical transmembrane segment at L6–V26 threads the bilayer. C411 serves as a coordination point for heme.

This sequence belongs to the cytochrome P450 family. Heme is required as a cofactor. Mainly expressed in flower buds, flowers, rosette leaves and roots. Lower expression in mature siliques and inflorescence stems. Not expressed in dry seeds.

It localises to the membrane. It catalyses the reaction 2-cis-(+)-abscisate + reduced [NADPH--hemoprotein reductase] + O2 = (+)-8'-hydroxyabscisate + oxidized [NADPH--hemoprotein reductase] + H2O + H(+). Its pathway is plant hormone degradation; abscisic acid degradation. With respect to regulation, inhibited by tetcyclcis, but not by metyrapone. Its function is as follows. Involved in the oxidative degradation of abscisic acid, but not in the isomerization of the produced 8'-hydroxyabscisic acid (8'-OH-ABA) to (-)-phaseic acid (PA). Involved in the control of postgermination growth. This Arabidopsis thaliana (Mouse-ear cress) protein is Abscisic acid 8'-hydroxylase 3 (CYP707A3).